A 304-amino-acid polypeptide reads, in one-letter code: Putative integrase/recombinase HI_1414 (304 aa).

The Core-binding (CB) domain maps to 30–109 (TLFSDVIKRY…TIGHIFKIAL (80 aa)). Positions 131–304 (PRTQRVTEEN…DMAEVAELLD (174 aa)) constitute a Tyr recombinase domain. Residues R174, K199, H256, R259, and H281 contribute to the active site. Residue Y291 is the O-(3'-phospho-DNA)-tyrosine intermediate of the active site.

It belongs to the 'phage' integrase family.

The protein is Putative integrase/recombinase HI_1414 of Haemophilus influenzae (strain ATCC 51907 / DSM 11121 / KW20 / Rd).